Consider the following 252-residue polypeptide: MAAEADSWDADTFEVVEPVAKRLVPAGVAGDRWAGEDEEDDVKDNWDDEEEEEEVKEAEVKQEPKVSEKKKIAEKIKEKEKQQKKKQEELKKRLEAPEEHKELTPEEQLADKLRLKKLQEESDLELAKETFGVNNACGIDAMNPSSKDDFTEFGKLLKEKITQYEKSLHYASFLEALVRDVCISLEIDDLKKITNSLTVLCSEKQKQEKQSKAKKKKKGVVPGGGLKATMKDDLADYGGYDGEYVQEFEDFM.

Disordered regions lie at residues 24-107 and 209-232; these read VPAG…TPEE and KQSK…TMKD. Over residues 36–56 the composition is skewed to acidic residues; the sequence is EDEEDDVKDNWDDEEEEEEVK. Residues 57 to 107 show a composition bias toward basic and acidic residues; that stretch reads EAEVKQEPKVSEKKKIAEKIKEKEKQQKKKQEELKKRLEAPEEHKELTPEE. Residues 65–130 are a coiled coil; it reads KVSEKKKIAE…ESDLELAKET (66 aa).

This sequence belongs to the eIF-3 subunit J family. In terms of assembly, component of the eukaryotic translation initiation factor 3 (eIF-3) complex, which is composed of 13 subunits: EIF3A, EIF3B, EIF3C, EIF3D, EIF3E, EIF3F, EIF3G, EIF3H, EIF3I, EIF3J, EIF3K, EIF3L and EIF3M.

The protein localises to the cytoplasm. Its function is as follows. Component of the eukaryotic translation initiation factor 3 (eIF-3) complex, which is involved in protein synthesis of a specialized repertoire of mRNAs and, together with other initiation factors, stimulates binding of mRNA and methionyl-tRNAi to the 40S ribosome. The eIF-3 complex specifically targets and initiates translation of a subset of mRNAs involved in cell proliferation. The chain is Eukaryotic translation initiation factor 3 subunit J from Gallus gallus (Chicken).